A 252-amino-acid polypeptide reads, in one-letter code: Triosephosphate isomerase (252 aa).

10-12 (NWK) contacts substrate. Residue histidine 96 is the Electrophile of the active site. Glutamate 168 acts as the Proton acceptor in catalysis. Residues glycine 174, serine 214, and 235–236 (GG) contribute to the substrate site.

Belongs to the triosephosphate isomerase family. As to quaternary structure, homodimer.

It is found in the cytoplasm. The enzyme catalyses D-glyceraldehyde 3-phosphate = dihydroxyacetone phosphate. It participates in carbohydrate biosynthesis; gluconeogenesis. Its pathway is carbohydrate degradation; glycolysis; D-glyceraldehyde 3-phosphate from glycerone phosphate: step 1/1. In terms of biological role, involved in the gluconeogenesis. Catalyzes stereospecifically the conversion of dihydroxyacetone phosphate (DHAP) to D-glyceraldehyde-3-phosphate (G3P). The protein is Triosephosphate isomerase of Lactococcus lactis subsp. cremoris (strain MG1363).